The following is a 427-amino-acid chain: UPF0761 membrane protein Cphamn1_1013 (427 aa).

A run of 6 helical transmembrane segments spans residues 51–71 (LLSL…SPVF), 107–127 (TVPT…ISTI), 147–167 (FTLY…GLVA), 188–208 (ILSY…YMLV), 218–238 (AVSG…WFSF), and 251–271 (GALS…VVAL).

Belongs to the UPF0761 family.

It localises to the cell inner membrane. The sequence is that of UPF0761 membrane protein Cphamn1_1013 from Chlorobium phaeobacteroides (strain BS1).